The primary structure comprises 203 residues: tRNA (guanine-N(7)-)-methyltransferase (203 aa).

Residues Glu34, Glu59, Asp86, and Asp107 each coordinate S-adenosyl-L-methionine. Asp107 is an active-site residue. Residues Lys111, Asp143, and 181–184 (TSYE) each bind substrate.

This sequence belongs to the class I-like SAM-binding methyltransferase superfamily. TrmB family.

The catalysed reaction is guanosine(46) in tRNA + S-adenosyl-L-methionine = N(7)-methylguanosine(46) in tRNA + S-adenosyl-L-homocysteine. It functions in the pathway tRNA modification; N(7)-methylguanine-tRNA biosynthesis. Functionally, catalyzes the formation of N(7)-methylguanine at position 46 (m7G46) in tRNA. This is tRNA (guanine-N(7)-)-methyltransferase from Mycoplasmopsis pulmonis (strain UAB CTIP) (Mycoplasma pulmonis).